The chain runs to 490 residues: Aspartyl/glutamyl-tRNA(Asn/Gln) amidotransferase subunit B (490 aa).

It belongs to the GatB/GatE family. GatB subfamily. As to quaternary structure, heterotrimer of A, B and C subunits.

It catalyses the reaction L-glutamyl-tRNA(Gln) + L-glutamine + ATP + H2O = L-glutaminyl-tRNA(Gln) + L-glutamate + ADP + phosphate + H(+). The catalysed reaction is L-aspartyl-tRNA(Asn) + L-glutamine + ATP + H2O = L-asparaginyl-tRNA(Asn) + L-glutamate + ADP + phosphate + 2 H(+). In terms of biological role, allows the formation of correctly charged Asn-tRNA(Asn) or Gln-tRNA(Gln) through the transamidation of misacylated Asp-tRNA(Asn) or Glu-tRNA(Gln) in organisms which lack either or both of asparaginyl-tRNA or glutaminyl-tRNA synthetases. The reaction takes place in the presence of glutamine and ATP through an activated phospho-Asp-tRNA(Asn) or phospho-Glu-tRNA(Gln). The chain is Aspartyl/glutamyl-tRNA(Asn/Gln) amidotransferase subunit B from Methylorubrum extorquens (strain CM4 / NCIMB 13688) (Methylobacterium extorquens).